We begin with the raw amino-acid sequence, 341 residues long: ATPase GET3 (341 aa).

ATP is bound at residue lysine 34 to threonine 41. Residue aspartate 63 is part of the active site. Glutamate 245 and asparagine 272 together coordinate ATP. The Zn(2+) site is built by cysteine 283 and cysteine 286.

The protein belongs to the arsA ATPase family. As to quaternary structure, homodimer.

It localises to the cytoplasm. Its subcellular location is the endoplasmic reticulum. In terms of biological role, ATPase required for the post-translational delivery of tail-anchored (TA) proteins to the endoplasmic reticulum. Recognizes and selectively binds the transmembrane domain of TA proteins in the cytosol. This complex then targets to the endoplasmic reticulum by membrane-bound receptors, where the tail-anchored protein is released for insertion. This process is regulated by ATP binding and hydrolysis. ATP binding drives the homodimer towards the closed dimer state, facilitating recognition of newly synthesized TA membrane proteins. ATP hydrolysis is required for insertion. Subsequently, the homodimer reverts towards the open dimer state, lowering its affinity for the membrane-bound receptor, and returning it to the cytosol to initiate a new round of targeting. The protein is ATPase GET3 of Paracoccidioides lutzii (strain ATCC MYA-826 / Pb01) (Paracoccidioides brasiliensis).